The following is a 421-amino-acid chain: Leucine-rich repeat-containing protein 42 (421 aa).

LRR repeat units follow at residues 149–170, 174–195, 202–222, 234–255, and 259–280; these read VLCS…EEIK, ELTR…LEHL, SVTQ…RKMT, NLAL…GYLF, and KLNC…KDKL. Residues 376 to 406 form a disordered region; sequence PLLSQESKKSKKRAFKESEQEQSSPQSAKQK. Low complexity predominate over residues 396 to 406; it reads EQSSPQSAKQK. Phosphoserine is present on Ser399.

Belongs to the LRRC42 family.

This is Leucine-rich repeat-containing protein 42 (Lrrc42) from Mus musculus (Mouse).